The following is a 165-amino-acid chain: Photosystem I assembly protein Ycf3 (165 aa).

TPR repeat units lie at residues alanine 32–proline 65, serine 69–leucine 102, and glycine 117–asparagine 150.

It belongs to the Ycf3 family.

It is found in the plastid. The protein resides in the chloroplast thylakoid membrane. Functionally, essential for the assembly of the photosystem I (PSI) complex. May act as a chaperone-like factor to guide the assembly of the PSI subunits. This chain is Photosystem I assembly protein Ycf3, found in Spinacia oleracea (Spinach).